The primary structure comprises 599 residues: Beta-(1--&gt;2)glucan export ATP-binding/permease protein NdvA (599 aa).

Residues 21 to 301 (TITMCVASVL…ISAFINQTVT (281 aa)) enclose the ABC transmembrane type-1 domain. Transmembrane regions (helical) follow at residues 22–42 (ITMCVASVLVALVTLAEPVLF), 55–75 (IFSPLLMWAALGGFNIMAAVF), 156–176 (MRMSLVLIVLGVIYVMIGQLV), 248–268 (MASTFSMVVVLVLGAYFVTKG), and 276–296 (IAFIGFAQLMIGRLDQISAFI). Residues 335 to 569 (IVFDNVTYEF…GGRFSDLLRA (235 aa)) form the ABC transporter domain. 368-375 (GPTGAGKT) contributes to the ATP binding site.

Belongs to the ABC transporter superfamily. Beta-(1--&gt;2)glucan exporter (TC 3.A.1.108.1) family. In terms of assembly, homodimer.

Its subcellular location is the cell inner membrane. The enzyme catalyses [(1-&gt;2)-beta-D-glucosyl](n)(in) + ATP + H2O = [(1-&gt;2)-beta-D-glucosyl](n)(out) + ADP + phosphate + H(+). Its function is as follows. Involved in beta-(1--&gt;2)glucan export. Its export to the periplasmic space is required to exert its action as a virulence factor. Transmembrane domains (TMD) form a pore in the inner membrane and the ATP-binding domain (NBD) is responsible for energy generation. This Brucella abortus (strain 2308) protein is Beta-(1--&gt;2)glucan export ATP-binding/permease protein NdvA.